Reading from the N-terminus, the 69-residue chain is VLIIAVLFLTACQLTTAETSSRGKQKHRALRSTDKYSRMTKHCTPPEVGCLFAYECCSKICWRPRCYPS.

An N-terminal signal peptide occupies residues 1–17 (VLIIAVLFLTACQLTTA). Residues 18–40 (ETSSRGKQKHRALRSTDKYSRMT) constitute a propeptide that is removed on maturation. Intrachain disulfides connect C43–C57, C50–C61, and C56–C66.

This sequence belongs to the conotoxin O1 superfamily. As to expression, expressed by the venom duct.

It localises to the secreted. This is Conotoxin AbVIE from Conus abbreviatus (Abbreviated cone).